Reading from the N-terminus, the 207-residue chain is Large ribosomal subunit protein uL4 (207 aa).

The segment covering 43 to 52 (NKRQGTQSAK) has biased composition (polar residues). Residues 43 to 72 (NKRQGTQSAKTRAEVRGGGRKPWKQKGTGR) form a disordered region. The span at 60–71 (GGRKPWKQKGTG) shows a compositional bias: basic residues.

It belongs to the universal ribosomal protein uL4 family. In terms of assembly, part of the 50S ribosomal subunit.

Its function is as follows. One of the primary rRNA binding proteins, this protein initially binds near the 5'-end of the 23S rRNA. It is important during the early stages of 50S assembly. It makes multiple contacts with different domains of the 23S rRNA in the assembled 50S subunit and ribosome. Functionally, forms part of the polypeptide exit tunnel. The sequence is that of Large ribosomal subunit protein uL4 from Alkaliphilus metalliredigens (strain QYMF).